The sequence spans 433 residues: Oxysterol-binding protein-like protein OBPa (433 aa).

This sequence belongs to the OSBP family.

This Candida albicans (strain SC5314 / ATCC MYA-2876) (Yeast) protein is Oxysterol-binding protein-like protein OBPa (OBPA).